The sequence spans 416 residues: Subtilisin-like protease 12 (416 aa).

The first 19 residues, 1–19 (MSILKMMLIYFAIFWVVNA), serve as a signal peptide directing secretion. Residues 20–116 (AQLLDIDSQG…VEPNKEMQVA (97 aa)) constitute a propeptide that is removed on maturation. Residues 35-115 (YIVVMKDRVS…FVEPNKEMQV (81 aa)) enclose the Inhibitor I9 domain. N-linked (GlcNAc...) asparagine glycosylation is found at Asn123, Asn136, and Asn150. One can recognise a Peptidase S8 domain in the interval 125–416 (TWGLSRISHK…NKLLYNGSGA (292 aa)). Catalysis depends on charge relay system residues Asp157 and His188. Asn249, Asn305, Asn334, and Asn353 each carry an N-linked (GlcNAc...) asparagine glycan. Catalysis depends on Ser362, which acts as the Charge relay system. Residues Asn404 and Asn412 are each glycosylated (N-linked (GlcNAc...) asparagine).

Belongs to the peptidase S8 family.

It is found in the secreted. In terms of biological role, secreted subtilisin-like serine protease with keratinolytic activity that contributes to pathogenicity. The polypeptide is Subtilisin-like protease 12 (SUB12) (Arthroderma benhamiae (strain ATCC MYA-4681 / CBS 112371) (Trichophyton mentagrophytes)).